The primary structure comprises 406 residues: Zinc finger CCCH domain-containing protein 15 homolog (406 aa).

The segment covering 1 to 11 (MPPKKAPAGPS) has biased composition (low complexity). The tract at residues 1-70 (MPPKKAPAGP…DKKKDEKEKK (70 aa)) is disordered. Residues 12 to 28 (KKTEQKKKEKVIEDKTF) are compositionally biased toward basic and acidic residues. Positions 38-50 (QQKFIQQVQKQVQ) are enriched in low complexity. Over residues 56–70 (PRQDGDKKKDEKEKK) the composition is skewed to basic and acidic residues. The stretch at 57 to 82 (RQDGDKKKDEKEKKLADLREMASIFK) forms a coiled coil. C3H1-type zinc fingers lie at residues 94–121 (DPKS…HDLS) and 166–203 (PTTE…HALP). The tract at residues 336 to 382 (VDGSGTIASSTRLLDQATEAAKTAAAEDGAASDDENPSSSAPANDAA) is disordered. Composition is skewed to low complexity over residues 352–364 (ATEA…AEDG) and 372–382 (PSSSAPANDAA).

Belongs to the ZC3H15/TMA46 family.

This chain is Zinc finger CCCH domain-containing protein 15 homolog, found in Drosophila pseudoobscura pseudoobscura (Fruit fly).